The following is a 402-amino-acid chain: GTPase Obg (402 aa).

The 159-residue stretch at 1–159 (MRFIDEAIVT…KELKFELKVV (159 aa)) folds into the Obg domain. The region spanning 160-334 (ADVGLIGLPN…VKYHLMNEIE (175 aa)) is the OBG-type G domain. GTP contacts are provided by residues 166 to 173 (GLPNAGKS), 191 to 195 (FTTLV), 213 to 216 (DIPG), 283 to 286 (NKID), and 315 to 317 (STL). Mg(2+) is bound by residues serine 173 and threonine 193. Residues 382-402 (AAFNNELDDDDDDGVEVVYAP) are disordered. Residues 387 to 396 (ELDDDDDDGV) are compositionally biased toward acidic residues.

This sequence belongs to the TRAFAC class OBG-HflX-like GTPase superfamily. OBG GTPase family. In terms of assembly, monomer. Requires Mg(2+) as cofactor.

Its subcellular location is the cytoplasm. Functionally, an essential GTPase which binds GTP, GDP and possibly (p)ppGpp with moderate affinity, with high nucleotide exchange rates and a fairly low GTP hydrolysis rate. Plays a role in control of the cell cycle, stress response, ribosome biogenesis and in those bacteria that undergo differentiation, in morphogenesis control. This is GTPase Obg from Psychrobacter sp. (strain PRwf-1).